Consider the following 277-residue polypeptide: 3-methyl-2-oxobutanoate hydroxymethyltransferase (277 aa).

Positions 43 and 82 each coordinate Mg(2+). 3-methyl-2-oxobutanoate is bound by residues 43 to 44 (DS), Asp-82, and Lys-112. Glu-114 contacts Mg(2+). The active-site Proton acceptor is the Glu-181.

It belongs to the PanB family. Homodecamer; pentamer of dimers. Mg(2+) is required as a cofactor.

Its subcellular location is the cytoplasm. The catalysed reaction is 3-methyl-2-oxobutanoate + (6R)-5,10-methylene-5,6,7,8-tetrahydrofolate + H2O = 2-dehydropantoate + (6S)-5,6,7,8-tetrahydrofolate. Its pathway is cofactor biosynthesis; (R)-pantothenate biosynthesis; (R)-pantoate from 3-methyl-2-oxobutanoate: step 1/2. Its function is as follows. Catalyzes the reversible reaction in which hydroxymethyl group from 5,10-methylenetetrahydrofolate is transferred onto alpha-ketoisovalerate to form ketopantoate. This Listeria monocytogenes serotype 4b (strain CLIP80459) protein is 3-methyl-2-oxobutanoate hydroxymethyltransferase.